Consider the following 915-residue polypeptide: Protein translocase subunit SecA (915 aa).

Residues Gln-87, 105–109 (GEGKT), and Asp-512 each bind ATP. The span at 849-864 (AAQQQARQAPLPNAPA) shows a compositional bias: low complexity. Residues 849-915 (AAQQQARQAP…CHGSRAKDHA (67 aa)) form a disordered region. A compositionally biased stretch (basic and acidic residues) spans 876–891 (PEEKVARVAAERHIGR). Zn(2+)-binding residues include Cys-895, Cys-897, Cys-906, and His-907.

Belongs to the SecA family. In terms of assembly, monomer and homodimer. Part of the essential Sec protein translocation apparatus which comprises SecA, SecYEG and auxiliary proteins SecDF-YajC and YidC. It depends on Zn(2+) as a cofactor.

It is found in the cell inner membrane. Its subcellular location is the cytoplasm. It carries out the reaction ATP + H2O + cellular proteinSide 1 = ADP + phosphate + cellular proteinSide 2.. Functionally, part of the Sec protein translocase complex. Interacts with the SecYEG preprotein conducting channel. Has a central role in coupling the hydrolysis of ATP to the transfer of proteins into and across the cell membrane, serving both as a receptor for the preprotein-SecB complex and as an ATP-driven molecular motor driving the stepwise translocation of polypeptide chains across the membrane. This Actinobacillus succinogenes (strain ATCC 55618 / DSM 22257 / CCUG 43843 / 130Z) protein is Protein translocase subunit SecA.